Here is an 85-residue protein sequence, read N- to C-terminus: Small ribosomal subunit protein bS18 (85 aa).

This sequence belongs to the bacterial ribosomal protein bS18 family. In terms of assembly, part of the 30S ribosomal subunit. Forms a tight heterodimer with protein bS6.

Functionally, binds as a heterodimer with protein bS6 to the central domain of the 16S rRNA, where it helps stabilize the platform of the 30S subunit. The polypeptide is Small ribosomal subunit protein bS18 (Helicobacter pylori (strain Shi470)).